Reading from the N-terminus, the 677-residue chain is Collagen alpha-2(IX) chain (677 aa).

The N-terminal stretch at 1 to 21 is a signal peptide; sequence MAHRSPALCLLLLHAACLCLA. Positions 25–161 are triple-helical region 4 (COL4); it reads GPPGEPGPRG…PGKPGPPGHI (137 aa). The segment covering 28–41 has biased composition (pro residues); that stretch reads GEPGPRGPPGPPGV. The segment at 28-516 is disordered; sequence GEPGPRGPPG…MPGQRGVAGR (489 aa). The segment covering 53-66 has biased composition (low complexity); sequence SPGAPGSPGAKGEP. Over residues 68–77 the composition is skewed to pro residues; it reads APGPDGPPGK. A compositionally biased stretch (gly residues) spans 91–100; sequence GPWGGQGLKG. 2 stretches are compositionally biased toward pro residues: residues 104 to 121 and 137 to 158; these read LPGP…PPGL and KGDP…PGPP. Proline 158 bears the 4-hydroxyproline mark. Residues 162–178 are nonhelical region 4 (NC4); that stretch reads QGVEGSADFLCPTNCPP. Serine 167 carries an O-linked (Xyl...) (glycosaminoglycan) serine glycan. Position 178 is a 4-hydroxyproline (proline 178). The interval 179 to 517 is triple-helical region 3 (COL3); sequence GPKGPQGLQG…PGQRGVAGRD (339 aa). Lysine 181 bears the 5-hydroxylysine mark. A glycan (O-linked (Gal...) hydroxylysine) is linked at lysine 181. Lysine 190 bears the Allysine mark. 3 stretches are compositionally biased toward low complexity: residues 363-382, 430-442, and 496-505; these read TPGL…AGVP, PGKT…TGDP, and RGLLGERGVP. The segment at 518-547 is nonhelical region 3 (NC3); sequence AGDQHIIDVVLKMMQEQLAEVAVSAKRAAL. The triple-helical region 2 (COL2) stretch occupies residues 548–630; it reads GGVGAMGPPG…PGLPGIPGHA (83 aa). The interval 550-657 is disordered; the sequence is VGAMGPPGPP…GRPGSPGPAG (108 aa). The segment covering 555–565 has biased composition (pro residues); it reads PPGPPGPPGPP. Basic and acidic residues predominate over residues 597–609; it reads KRGEKGERGDTGR. The segment at 631–632 is nonhelical region 2 (NC2); that stretch reads LA. Positions 633–662 are triple-helical region 1 (COL1); the sequence is GKDGERGPPGVPGDAGRPGSPGPAGLPGFC. Positions 663-677 are nonhelical region 1 (NC1); sequence EPAACLGALPTPRHG.

The protein belongs to the fibril-associated collagens with interrupted helices (FACIT) family. As to quaternary structure, heterotrimer of an alpha 1(IX), an alpha 2(IX) and an alpha 3(IX) chain. The chains are linked to each other by interchain disulfide bonds. Trimers are also cross-linked via hydroxylysines. Covalently linked to the telopeptides of type II collagen by lysine-derived cross-links. In terms of processing, prolines at the third position of the tripeptide repeating unit (G-X-Y) are hydroxylated in some or all of the chains.

It localises to the secreted. The protein localises to the extracellular space. Its subcellular location is the extracellular matrix. Structural component of hyaline cartilage and vitreous of the eye. This is Collagen alpha-2(IX) chain (COL9A2) from Gallus gallus (Chicken).